The following is a 161-amino-acid chain: Nucleotide-binding protein H16_A3060 (161 aa).

This sequence belongs to the YajQ family.

Nucleotide-binding protein. This chain is Nucleotide-binding protein H16_A3060, found in Cupriavidus necator (strain ATCC 17699 / DSM 428 / KCTC 22496 / NCIMB 10442 / H16 / Stanier 337) (Ralstonia eutropha).